A 699-amino-acid polypeptide reads, in one-letter code: Epithelial sodium channel subunit alpha (699 aa).

The tract at residues 1–71 (MLDHTRAPEL…EPRQPTEEEE (71 aa)) is disordered. Topologically, residues 1–110 (MLDHTRAPEL…CSKHNRMKTA (110 aa)) are cytoplasmic. Residues 111–131 (FWAVLWLCTFGMMYWQFALLF) traverse the membrane as a helical segment. Topologically, residues 132–589 (EEYFSYPVSL…SQWSLWFGSS (458 aa)) are extracellular. Intrachain disulfides connect Cys-158-Cys-332, Cys-256-Cys-263, Cys-309-Cys-316, Cys-421-Cys-506, Cys-443-Cys-483, Cys-443-Cys-502, Cys-447-Cys-498, Cys-456-Cys-483, Cys-456-Cys-506, and Cys-458-Cys-472. The interval 200-270 (RRRSTRDLRG…SDCFYQTYSS (71 aa)) is gating release of inhibition by proteolysis (GRIP); protease-sensitive region that is responsible for the proteolytic activation of the channel. The tract at residues 211-244 (LPHPLQRLRTPPPPNPARSARSASSSVRDNNPQV) is disordered. Residues 227 to 238 (ARSARSASSSVR) are compositionally biased toward low complexity. A helical membrane pass occupies residues 590–610 (VLSVVEMAELIFDLLVITLIM). Residues 611–699 (LLHRFRSRYW…SSACAPAMAL (89 aa)) lie on the Cytoplasmic side of the membrane. The tract at residues 637–699 (ASSFPSRFCP…SSACAPAMAL (63 aa)) is disordered. The span at 656 to 667 (PQQGTTPPLALT) shows a compositional bias: low complexity. The PY motif; recruits WW domain-containing proteins and is thereby required for ubiquitination and inhibition of the channel by NEDD4 and NEDD4L signature appears at 669-673 (PPPAY).

This sequence belongs to the amiloride-sensitive sodium channel (TC 1.A.6) family. SCNN1A subfamily. Heterotrimer; containing an alpha/SCNN1A, a beta/SCNN1B and a gamma/SCNN1G subunit. Interacts with WWP1 (via WW domains). Interacts with WWP2 (via WW domains); inhibits the channel. Interacts with BPIFA1; the interaction is indirect via SCNN1B and inhibits the proteolytic processing of SCNN1A and SCNN1G and the activation of ENaC. Interacts with the full-length immature form of PCSK9 (pro-PCSK9). Ubiquitinated. Can be ubiquitinated at multiple sites and undergo monoubiquitination and polyubiquitination. Ubiquitination by NEDD4 or NEDD4L inhibits the ENaC channel through endocytosis, intracellular retention and degradation of its individual subunits. Post-translationally, ENaC is activated through the proteolytic maturation of its subunits. Furin cleaves the SCNN1A subunit, which results in a stepwise increase in the open probability of the channel due to the release of an inhibitory tract. BPIFA1, which is recruited by the SCNN1B subunit, prevents the proteolytic activation of ENaC. In terms of processing, N-glycosylated. In terms of tissue distribution, expressed in kidney (at protein level). Expressed in lung (at protein level). Expressed in the epididymis (at protein level). In the caput and corpus regions of the epididymis, expressed uniformly on the luminal and basal surfaces of the ducts and in the sperm in the duct lumen. Also expressed in distal colon and, at low levels, in liver.

It localises to the apical cell membrane. The protein resides in the cell projection. The protein localises to the cilium. It is found in the cytoplasmic granule. Its subcellular location is the cytoplasm. It localises to the cytoplasmic vesicle. The protein resides in the secretory vesicle. The protein localises to the acrosome. It is found in the flagellum. It carries out the reaction Na(+)(in) = Na(+)(out). Its activity is regulated as follows. Originally identified and characterized by its inhibition by the diuretic drug amiloride. In terms of biological role, this is one of the three pore-forming subunits of the heterotrimeric epithelial sodium channel (ENaC), a critical regulator of sodium balance and fluid homeostasis. ENaC operates in epithelial tissues, where it mediates the electrodiffusion of sodium ions from extracellular fluid through the apical membrane of cells, with water following osmotically. It plays a key role in maintaining sodium homeostasis through electrogenic sodium reabsorption in the kidneys. Additionally, ENaC is essential for airway surface liquid homeostasis, which is crucial for proper mucus clearance. This is Epithelial sodium channel subunit alpha from Mus musculus (Mouse).